The sequence spans 592 residues: MLAPIQTIARPVSSILPATGALAAKRTFFAPSEVYNKKQVIVTKKTGLDILNDPKLNKGSAFTADEKDRLGIRGLVPPRPQSLEAQYKRCKTNLDKISDPLEKFIYLNHLQNRNETLYYKMILENFVELAPIIYTPVVGEACQKFHKIFTQTRGMYFSTADRGQMSAVAANWPYDDVDVIVVTDGSRILGLGDLGAGGMQIPIGKLTLYVCGGGINPRNVLPIVLDVGTNNKELLNDPLYLGMQHPRLQGEEFHAFVDEWVSAITDRFPKAVIQFEDFMMPNALDLLLKYKDQICMFNDDIQSTGAITLASVLATMRARGGTFADIKKETFLCLGAGSSGVGVCETIVDCIVAEGATREEAYAQFYMFDHKGLLGKGRDDLLPSQQVFMRKEIEGGKTPAELLKKIKPTCLLGLSTCPKLFNKEMLSYVASYCEKPGIFPLSNPTSRSECTAEEAVEFTDGNLIFASGSPFDPVEWKGKTIQTNQCNNSYSFPGIGLGLVSSRATRVPFETFQVCARVIASLGTPEMLATGKIFPDLDNLRAVSLEVGIEVAKMAERMNIATQFPPKGMDWREWLKHNMWQPEYPHIVVKNL.

Residues 1–27 (MLAPIQTIARPVSSILPATGALAAKRT) constitute a hydrogenosome transit peptide. The active-site Proton donor is tyrosine 134. 182–205 (VTDGSRILGLGDLGAGGMQIPIGK) lines the NADP(+) pocket. Arginine 187 is a binding site for NAD(+). Lysine 205 acts as the Proton acceptor in catalysis. A divalent metal cation-binding residues include glutamate 276, aspartate 277, and aspartate 300. Aspartate 300 serves as a coordination point for NAD(+). 335–352 (GAGSSGVGVCETIVDCIV) contacts NADP(+). NAD(+) is bound at residue asparagine 443.

This sequence belongs to the malic enzymes family. Mg(2+) serves as cofactor. Requires Mn(2+) as cofactor.

Its subcellular location is the hydrogenosome. The catalysed reaction is (S)-malate + NADP(+) = pyruvate + CO2 + NADPH. It carries out the reaction oxaloacetate + H(+) = pyruvate + CO2. The sequence is that of Malic enzyme, hydrogenosomal from Neocallimastix frontalis (Rumen fungus).